The chain runs to 171 residues: S-ribosylhomocysteine lyase (171 aa).

Residues histidine 54, histidine 58, and cysteine 128 each coordinate Fe cation.

It belongs to the LuxS family. Homodimer. Fe cation serves as cofactor.

The catalysed reaction is S-(5-deoxy-D-ribos-5-yl)-L-homocysteine = (S)-4,5-dihydroxypentane-2,3-dione + L-homocysteine. Functionally, involved in the synthesis of autoinducer 2 (AI-2) which is secreted by bacteria and is used to communicate both the cell density and the metabolic potential of the environment. The regulation of gene expression in response to changes in cell density is called quorum sensing. Catalyzes the transformation of S-ribosylhomocysteine (RHC) to homocysteine (HC) and 4,5-dihydroxy-2,3-pentadione (DPD). In Klebsiella pneumoniae (strain 342), this protein is S-ribosylhomocysteine lyase.